Reading from the N-terminus, the 137-residue chain is Transcription antitermination protein NusB (137 aa).

The protein belongs to the NusB family.

Its function is as follows. Involved in transcription antitermination. Required for transcription of ribosomal RNA (rRNA) genes. Binds specifically to the boxA antiterminator sequence of the ribosomal RNA (rrn) operons. This Haemophilus ducreyi (strain 35000HP / ATCC 700724) protein is Transcription antitermination protein NusB.